Reading from the N-terminus, the 201-residue chain is MARYTGPITRKSRRLRIDLVGGDQAFEKRPYPPGQHGRARIKESEYLLQLQEKQKARFTYGVMEKQFRRYYEEAVRQPGKTGEELLKILESRLDNVIYRAGLARTRRMARQLVSHGHFSVNGVHVNVPSYRVSQYDIIDIRDKSLDTVPFQIARETVGDRPIPSWLQVVGEHQRILIHQLPERVQIEVPLIEQLIVEYYSK.

In terms of domain architecture, S4 RNA-binding spans 91–157 (SRLDNVIYRA…VPFQIARETV (67 aa)).

This sequence belongs to the universal ribosomal protein uS4 family. In terms of assembly, part of the 30S ribosomal subunit. Contacts protein S5. The interaction surface between S4 and S5 is involved in control of translational fidelity.

In terms of biological role, one of the primary rRNA binding proteins, it binds directly to 16S rRNA where it nucleates assembly of the body of the 30S subunit. Functionally, with S5 and S12 plays an important role in translational accuracy. This chain is Small ribosomal subunit protein uS4, found in Mycobacterium leprae (strain Br4923).